Consider the following 888-residue polypeptide: Rab GTPase-activating protein eat-17 (888 aa).

Residues 41 to 60 (RSNSNSTSSPRNSPSQLSPP) are compositionally biased toward low complexity. Disordered regions lie at residues 41–87 (RSNS…CETG) and 104–135 (LNKSNEEDSRSVASKKTGSSESRKGAREHSPE). Residues 114–123 (SVASKKTGSS) show a composition bias toward polar residues. Residues 124 to 133 (ESRKGAREHS) are compositionally biased toward basic and acidic residues. The 185-residue stretch at 173-357 (GIPQHFRMIA…RIMDCFLVEG (185 aa)) folds into the Rab-GAP TBC domain. A disordered region spans residues 631 to 654 (ASIEKESTSEAHSTQQQPSPPLTS). Residues 694–770 (EADTLAELKE…ESEFNEGRIN (77 aa)) adopt a coiled-coil conformation. Positions 854-888 (LAEEGSATETDELRPKELNDGNDTTDSGVQLSDSH) are disordered. Residues 874-888 (GNDTTDSGVQLSDSH) show a composition bias toward polar residues.

In terms of assembly, may interact with rab-6.2 (in GTP-bound form). In terms of tissue distribution, highly expressed in the terminal bulb muscles, pharyngeal muscle, in intestine and vulva.

Its function is as follows. Rab GTPase activating protein for the small GTPase rab-6.2. Required for grinder formation, which is the feeding organ that breaks down food. In Caenorhabditis elegans, this protein is Rab GTPase-activating protein eat-17.